A 37-amino-acid chain; its full sequence is MKVRPSVKPMCEKCKVIRRKGKVMVICENPKHKQKQG.

The protein belongs to the bacterial ribosomal protein bL36 family.

The chain is Large ribosomal subunit protein bL36 from Listeria innocua serovar 6a (strain ATCC BAA-680 / CLIP 11262).